A 254-amino-acid polypeptide reads, in one-letter code: Type III pantothenate kinase (254 aa).

6–13 (DVGNTNTT) is an ATP binding site. Substrate is bound by residues Tyr100 and 107 to 110 (GADR). Asp109 (proton acceptor) is an active-site residue. Asp129 serves as a coordination point for K(+). Position 132 (Thr132) interacts with ATP. Thr184 lines the substrate pocket.

This sequence belongs to the type III pantothenate kinase family. Homodimer. NH4(+) is required as a cofactor. Requires K(+) as cofactor.

The protein resides in the cytoplasm. The catalysed reaction is (R)-pantothenate + ATP = (R)-4'-phosphopantothenate + ADP + H(+). Its pathway is cofactor biosynthesis; coenzyme A biosynthesis; CoA from (R)-pantothenate: step 1/5. Catalyzes the phosphorylation of pantothenate (Pan), the first step in CoA biosynthesis. The polypeptide is Type III pantothenate kinase (Anaeromyxobacter dehalogenans (strain 2CP-1 / ATCC BAA-258)).